Consider the following 207-residue polypeptide: Holliday junction branch migration complex subunit RuvA (207 aa).

A domain I region spans residues 1 to 64; sequence MIGLINGQVQ…EDAQLLYGFI (64 aa). The interval 65–143 is domain II; the sequence is DRKERDVFRQ…NIEVDSSHLE (79 aa). The segment at 144 to 152 is flexible linker; it reads FAMQPAPIS. The domain III stretch occupies residues 153–207; the sequence is AEGSIIAEVEGALISLGYKEREAQQAIKAAKSNGETFADTQSLLKATLQQFQSFK.

It belongs to the RuvA family. In terms of assembly, homotetramer. Forms an RuvA(8)-RuvB(12)-Holliday junction (HJ) complex. HJ DNA is sandwiched between 2 RuvA tetramers; dsDNA enters through RuvA and exits via RuvB. An RuvB hexamer assembles on each DNA strand where it exits the tetramer. Each RuvB hexamer is contacted by two RuvA subunits (via domain III) on 2 adjacent RuvB subunits; this complex drives branch migration. In the full resolvosome a probable DNA-RuvA(4)-RuvB(12)-RuvC(2) complex forms which resolves the HJ.

It localises to the cytoplasm. Its function is as follows. The RuvA-RuvB-RuvC complex processes Holliday junction (HJ) DNA during genetic recombination and DNA repair, while the RuvA-RuvB complex plays an important role in the rescue of blocked DNA replication forks via replication fork reversal (RFR). RuvA specifically binds to HJ cruciform DNA, conferring on it an open structure. The RuvB hexamer acts as an ATP-dependent pump, pulling dsDNA into and through the RuvAB complex. HJ branch migration allows RuvC to scan DNA until it finds its consensus sequence, where it cleaves and resolves the cruciform DNA. The chain is Holliday junction branch migration complex subunit RuvA from Psychrobacter cryohalolentis (strain ATCC BAA-1226 / DSM 17306 / VKM B-2378 / K5).